A 245-amino-acid chain; its full sequence is Orotidine 5'-phosphate decarboxylase (245 aa).

Substrate is bound by residues D22, K44, 71–80 (DLKFHDIPNT), T131, R192, Q201, G221, and R222. K73 serves as the catalytic Proton donor.

The protein belongs to the OMP decarboxylase family. Type 1 subfamily. In terms of assembly, homodimer.

It carries out the reaction orotidine 5'-phosphate + H(+) = UMP + CO2. The protein operates within pyrimidine metabolism; UMP biosynthesis via de novo pathway; UMP from orotate: step 2/2. Its function is as follows. Catalyzes the decarboxylation of orotidine 5'-monophosphate (OMP) to uridine 5'-monophosphate (UMP). This is Orotidine 5'-phosphate decarboxylase from Escherichia coli O157:H7.